Consider the following 372-residue polypeptide: Aminomethyltransferase (372 aa).

This sequence belongs to the GcvT family. The glycine cleavage system is composed of four proteins: P, T, L and H.

It carries out the reaction N(6)-[(R)-S(8)-aminomethyldihydrolipoyl]-L-lysyl-[protein] + (6S)-5,6,7,8-tetrahydrofolate = N(6)-[(R)-dihydrolipoyl]-L-lysyl-[protein] + (6R)-5,10-methylene-5,6,7,8-tetrahydrofolate + NH4(+). Its function is as follows. The glycine cleavage system catalyzes the degradation of glycine. This chain is Aminomethyltransferase, found in Burkholderia mallei (strain NCTC 10247).